We begin with the raw amino-acid sequence, 291 residues long: Nucleotide-binding protein RALTA_A0325 (291 aa).

8 to 15 (GISGSGKS) contributes to the ATP binding site. A GTP-binding site is contributed by 57–60 (DIRS).

Belongs to the RapZ-like family.

Displays ATPase and GTPase activities. The protein is Nucleotide-binding protein RALTA_A0325 of Cupriavidus taiwanensis (strain DSM 17343 / BCRC 17206 / CCUG 44338 / CIP 107171 / LMG 19424 / R1) (Ralstonia taiwanensis (strain LMG 19424)).